The chain runs to 207 residues: Small ribosomal subunit protein uS4 (207 aa).

The interval 30–51 (DKSKFDSKPGQHGRTSGARTSD) is disordered. An S4 RNA-binding domain is found at 97-157 (SRLDNVVYRM…EKSKKQGRIA (61 aa)).

It belongs to the universal ribosomal protein uS4 family. Part of the 30S ribosomal subunit. Contacts protein S5. The interaction surface between S4 and S5 is involved in control of translational fidelity.

In terms of biological role, one of the primary rRNA binding proteins, it binds directly to 16S rRNA where it nucleates assembly of the body of the 30S subunit. With S5 and S12 plays an important role in translational accuracy. The sequence is that of Small ribosomal subunit protein uS4 from Verminephrobacter eiseniae (strain EF01-2).